Reading from the N-terminus, the 108-residue chain is Abdominal ganglion neuropeptide R3-14 (108 aa).

The signal sequence occupies residues 1 to 23 (MQVLHLCLAVSIAVALLSQAAWS). A pyrrolidone carboxylic acid (Glu); partial mark is found at Glu24 and Glu52. Gln66 bears the Pyrrolidone carboxylic acid mark.

In terms of processing, the partial formation of pyroglutamate from N-terminal glutamic acid in peptides isolated from single cells is detected by mass spectrometry. There are indications this modification depends on a heat sensitive factor. As to expression, neurons R3-R14. A cluster of 12 giant neurons located on the right side of the abdominal ganglion.

It is found in the secreted. HRBP is a myoactive peptide that excites Aplysia heart and enhances gut motility in vitro. This chain is Abdominal ganglion neuropeptide R3-14, found in Aplysia californica (California sea hare).